Consider the following 256-residue polypeptide: POU domain class 2-associating factor 1 (256 aa).

Residues 1–23 (MLWQKPTAPEQAPAPPRPYQGVR) form a disordered region. In terms of domain architecture, OCA spans 16–38 (PRPYQGVRVKEPVKELLRRKRGH).

Belongs to the POU2AF family. Interacts with POU2F1/OCT1 and POU2F2/OCT2; the interaction increases POU2F1 and POU2F2 transactivation activity. In terms of processing, ubiquitinated; mediated by SIAH1 or SIAH2 and leading to its subsequent proteasomal degradation.

The protein localises to the nucleus. Transcriptional coactivator that specifically associates with either POU2F1/OCT1 or POU2F2/OCT2. It boosts the POU2F1/OCT1 mediated promoter activity and to a lesser extent, that of POU2F2/OCT2. It recognizes the POU domains of POU2F1/OCT1 and POU2F2/OCT2. It is essential for the response of B-cells to antigens and required for the formation of germinal centers. Regulates IL6 expression in B cells as POU2F2/OCT2 coactivator. The protein is POU domain class 2-associating factor 1 (POU2AF1) of Bos taurus (Bovine).